The primary structure comprises 119 residues: Membrane-anchored ubiquitin-fold protein 1 (119 aa).

Positions 9–75 constitute a Ubiquitin-like domain; it reads FEIKFRLPDG…LENNKTLSEC (67 aa). At cysteine 116 the chain carries Cysteine methyl ester. Cysteine 116 carries S-farnesyl cysteine lipidation. Positions 117 to 119 are cleaved as a propeptide — removed in mature form; sequence SIM.

The protein resides in the cell membrane. In terms of biological role, may serve as docking site to facilitate the association of other proteins to the plasma membrane. This chain is Membrane-anchored ubiquitin-fold protein 1 (MUB1), found in Oryza sativa subsp. japonica (Rice).